Reading from the N-terminus, the 233-residue chain is Phosphoribosylformylglycinamidine synthase subunit PurQ (233 aa).

A Glutamine amidotransferase type-1 domain is found at 9-233 (RIGIVTFPGS…LSGFLSAFSS (225 aa)). Cys92 serves as the catalytic Nucleophile. Catalysis depends on residues His201 and Glu203.

As to quaternary structure, part of the FGAM synthase complex composed of 1 PurL, 1 PurQ and 2 PurS subunits.

It is found in the cytoplasm. It carries out the reaction N(2)-formyl-N(1)-(5-phospho-beta-D-ribosyl)glycinamide + L-glutamine + ATP + H2O = 2-formamido-N(1)-(5-O-phospho-beta-D-ribosyl)acetamidine + L-glutamate + ADP + phosphate + H(+). The enzyme catalyses L-glutamine + H2O = L-glutamate + NH4(+). It participates in purine metabolism; IMP biosynthesis via de novo pathway; 5-amino-1-(5-phospho-D-ribosyl)imidazole from N(2)-formyl-N(1)-(5-phospho-D-ribosyl)glycinamide: step 1/2. Part of the phosphoribosylformylglycinamidine synthase complex involved in the purines biosynthetic pathway. Catalyzes the ATP-dependent conversion of formylglycinamide ribonucleotide (FGAR) and glutamine to yield formylglycinamidine ribonucleotide (FGAM) and glutamate. The FGAM synthase complex is composed of three subunits. PurQ produces an ammonia molecule by converting glutamine to glutamate. PurL transfers the ammonia molecule to FGAR to form FGAM in an ATP-dependent manner. PurS interacts with PurQ and PurL and is thought to assist in the transfer of the ammonia molecule from PurQ to PurL. The chain is Phosphoribosylformylglycinamidine synthase subunit PurQ from Frankia casuarinae (strain DSM 45818 / CECT 9043 / HFP020203 / CcI3).